We begin with the raw amino-acid sequence, 151 residues long: 3-hydroxyacyl-[acyl-carrier-protein] dehydratase FabZ (151 aa).

Histidine 53 is a catalytic residue.

It belongs to the thioester dehydratase family. FabZ subfamily.

The protein resides in the cytoplasm. The catalysed reaction is a (3R)-hydroxyacyl-[ACP] = a (2E)-enoyl-[ACP] + H2O. In terms of biological role, involved in unsaturated fatty acids biosynthesis. Catalyzes the dehydration of short chain beta-hydroxyacyl-ACPs and long chain saturated and unsaturated beta-hydroxyacyl-ACPs. This chain is 3-hydroxyacyl-[acyl-carrier-protein] dehydratase FabZ, found in Erythrobacter litoralis (strain HTCC2594).